The chain runs to 221 residues: Urease accessory protein UreE (221 aa).

Basic and acidic residues predominate over residues 171-180 (HHGHDHDHGH). The interval 171-221 (HHGHDHDHGHSHSHSHSHSHSHSHSHDHDHDHDHEHDVKGHVHGPGCGHKH) is disordered. Residues 181-193 (SHSHSHSHSHSHS) show a composition bias toward basic residues. Residues 194–210 (HSHDHDHDHDHEHDVKG) show a composition bias toward basic and acidic residues.

This sequence belongs to the UreE family.

The protein resides in the cytoplasm. Involved in urease metallocenter assembly. Binds nickel. Probably functions as a nickel donor during metallocenter assembly. In Cupriavidus pinatubonensis (strain JMP 134 / LMG 1197) (Cupriavidus necator (strain JMP 134)), this protein is Urease accessory protein UreE.